Consider the following 817-residue polypeptide: DNA gyrase subunit A (817 aa).

Residues 39–505 (LPDARDGLKP…AVEDVSIEDL (467 aa)) form the Topo IIA-type catalytic domain. Tyr127 functions as the O-(5'-phospho-DNA)-tyrosine intermediate in the catalytic mechanism. The GyrA-box signature appears at 532–538 (QGRGGKG).

This sequence belongs to the type II topoisomerase GyrA/ParC subunit family. In terms of assembly, heterotetramer, composed of two GyrA and two GyrB chains. In the heterotetramer, GyrA contains the active site tyrosine that forms a transient covalent intermediate with DNA, while GyrB binds cofactors and catalyzes ATP hydrolysis.

The protein localises to the cytoplasm. It carries out the reaction ATP-dependent breakage, passage and rejoining of double-stranded DNA.. Functionally, a type II topoisomerase that negatively supercoils closed circular double-stranded (ds) DNA in an ATP-dependent manner to modulate DNA topology and maintain chromosomes in an underwound state. Negative supercoiling favors strand separation, and DNA replication, transcription, recombination and repair, all of which involve strand separation. Also able to catalyze the interconversion of other topological isomers of dsDNA rings, including catenanes and knotted rings. Type II topoisomerases break and join 2 DNA strands simultaneously in an ATP-dependent manner. The sequence is that of DNA gyrase subunit A from Aminobacterium colombiense (strain DSM 12261 / ALA-1).